A 326-amino-acid chain; its full sequence is AA9 family lytic polysaccharide monooxygenase B (326 aa).

A signal peptide spans 1 to 19 (MKSFTIAALAALWAQEAAA). The Cu(2+) site is built by His-20 and His-98. A disulfide bond links Cys-57 and Cys-192. Positions 178 and 187 each coordinate O2. Tyr-189 is a binding site for Cu(2+). A compositionally biased stretch (low complexity) spans 265-281 (PSATLTQPTSTATATSA). Residues 265–286 (PSATLTQPTSTATATSAPGGGG) are disordered. A CBM1 domain is found at 289-326 (CTAAKYQQCGGTGYTGCTTCASGSTCSAVSPPYYSQCL).

This sequence belongs to the polysaccharide monooxygenase AA9 family. The cofactor is Cu(2+).

Its subcellular location is the secreted. The catalysed reaction is [(1-&gt;4)-beta-D-glucosyl]n+m + reduced acceptor + O2 = 4-dehydro-beta-D-glucosyl-[(1-&gt;4)-beta-D-glucosyl]n-1 + [(1-&gt;4)-beta-D-glucosyl]m + acceptor + H2O.. Its function is as follows. Lytic polysaccharide monooxygenase (LPMO) that depolymerizes crystalline and amorphous polysaccharides via the oxidation of scissile alpha- or beta-(1-4)-glycosidic bonds, yielding C1 and C4 oxidation products. Catalysis by LPMOs requires the reduction of the active-site copper from Cu(II) to Cu(I) by a reducing agent and H(2)O(2) or O(2) as a cosubstrate. Shows no activity on wheat arabinoxylan, konjac glucomannan, acetylated spruce galactoglucomannan, or cellopentaose. The protein is AA9 family lytic polysaccharide monooxygenase B of Thermothielavioides terrestris (strain ATCC 38088 / NRRL 8126) (Thielavia terrestris).